The primary structure comprises 178 residues: MLEGIIRESIGKKGTKALRRDGYLIANIYGKGLQNLHAAFKENEYIRTVRNKETLSFPIKVDSKEMNVVVQAYEAHPVTGKLLHVDLMVAQPNVVTHYHVPVVTEGDAIGLKNKGLIHISKPRLRVKATIENTPNSIVVDVTKMDVGDAKMVRDIAKIANVTFTDADRVSVLSVIKAK.

It belongs to the bacterial ribosomal protein bL25 family. CTC subfamily. In terms of assembly, part of the 50S ribosomal subunit; part of the 5S rRNA/L5/L18/L25 subcomplex. Contacts the 5S rRNA. Binds to the 5S rRNA independently of L5 and L18.

Its function is as follows. This is one of the proteins that binds to the 5S RNA in the ribosome where it forms part of the central protuberance. This is Large ribosomal subunit protein bL25 from Sulfurimonas denitrificans (strain ATCC 33889 / DSM 1251) (Thiomicrospira denitrificans (strain ATCC 33889 / DSM 1251)).